A 755-amino-acid chain; its full sequence is Cellulose synthase-like protein B3 (755 aa).

The next 2 helical transmembrane spans lie at 24–44 (VVDL…ILLM) and 51–71 (WVVA…ITSI). Catalysis depends on residues D136 and D461. The next 6 membrane-spanning stretches (helical) occupy residues 534–556 (YLYI…LPAY), 569–589 (VYLG…LWEF), 615–635 (LFSI…VFIV), 674–694 (FLPG…CSVG), 702–722 (GSGL…LPFL), and 733–753 (IPWS…VFSV).

It belongs to the glycosyltransferase 2 family. Plant cellulose synthase-like B subfamily. In terms of tissue distribution, expressed in young seedlings, primarily in the vascular tissue.

It is found in the golgi apparatus membrane. Functionally, thought to be a Golgi-localized beta-glycan synthase that polymerize the backbones of noncellulosic polysaccharides (hemicelluloses) of plant cell wall. This Arabidopsis thaliana (Mouse-ear cress) protein is Cellulose synthase-like protein B3 (CSLB3).